Here is a 139-residue protein sequence, read N- to C-terminus: Ribulose bisphosphate carboxylase small subunit (139 aa).

This sequence belongs to the RuBisCO small chain family. As to quaternary structure, heterohexadecamer of 8 large and 8 small subunits.

It is found in the plastid. The protein resides in the chloroplast. Its function is as follows. RuBisCO catalyzes two reactions: the carboxylation of D-ribulose 1,5-bisphosphate, the primary event in carbon dioxide fixation, as well as the oxidative fragmentation of the pentose substrate in the photorespiration process. Both reactions occur simultaneously and in competition at the same active site. Although the small subunit is not catalytic it is essential for maximal activity. In Olisthodiscus luteus (Marine phytoflagellate), this protein is Ribulose bisphosphate carboxylase small subunit.